Reading from the N-terminus, the 75-residue chain is MYKMYFLKDQKFSLSGTIRINDKTQSEYGSVWCPGLSITGLHHDAIDHNMFEEMETEIIEYLGPWVQAEYRRIKG.

This is an uncharacterized protein from Dryophytes versicolor (chameleon treefrog).